The following is a 395-amino-acid chain: Zinc finger protein 385D (395 aa).

A Matrin-type 1 zinc finger spans residues 80 to 110; the sequence is ISCNICQLRFNSDSQAAAHYKGTKHAKKLKA. The span at 169–193 shows a compositional bias: polar residues; the sequence is MTTEITSKVEKSPTTATGNSSCPST. The interval 169-194 is disordered; the sequence is MTTEITSKVEKSPTTATGNSSCPSTE. 2 Matrin-type zinc fingers span residues 204–234 and 267–297; these read LYCS…MLEA and FHCE…RAAG. A disordered region spans residues 282–309; that stretch reads LKQHISSRRHKDRAAGKPPKPKYSPYNK.

It localises to the nucleus. This Homo sapiens (Human) protein is Zinc finger protein 385D (ZNF385D).